The primary structure comprises 54 residues: U-myrmicitoxin(01)-Tb5a (54 aa).

Positions 1-26 (MQLSHLLLAFAMIFVMTIMYAPQVQA) are cleaved as a signal peptide. Positions 27–38 (DAWADANADADV) are excised as a propeptide.

Belongs to the formicidae venom precursor-01 superfamily. In terms of processing, contains 1 disulfide bond. Expressed by the venom gland.

It localises to the secreted. This chain is U-myrmicitoxin(01)-Tb5a, found in Tetramorium bicarinatum (Tramp ant).